A 115-amino-acid polypeptide reads, in one-letter code: Promotilin (115 aa).

The first 25 residues, 1-25 (MVSRKAVAALLVVHVAAMLASQTEA), serve as a signal peptide directing secretion. The disordered stretch occupies residues 39 to 72 (QEKERNKGQKKSLSVWQRSGEEGPVDPAEPIREE).

Belongs to the motilin family.

The protein localises to the secreted. Its function is as follows. Plays an important role in the regulation of interdigestive gastrointestinal motility and indirectly causes rhythmic contraction of duodenal and colonic smooth muscle. The chain is Promotilin (MLN) from Homo sapiens (Human).